The following is a 641-amino-acid chain: Lipase (641 aa).

Positions 1-38 are cleaved as a signal peptide; that stretch reads MKETKHQHTFSIRKSAYGAASVMVASCIFVIGGGVAEA. 2 disordered regions span residues 41 to 174 and 206 to 246; these read STTQ…PSVD and TVSP…KPTV. Low complexity predominate over residues 53–64; sequence QTSQQETHTHQT. Over residues 73–94 the composition is skewed to basic and acidic residues; that stretch reads TPEHVDDSKEATPLPEKAESPK. Composition is skewed to polar residues over residues 95 to 106 and 127 to 139; these read TEVTVQPSSHTQ and PEST…VESN. The segment covering 140-165 has biased composition (basic and acidic residues); that stretch reads KATENEMSPVEHHASNVEKREDRLET. The span at 227-239 shows a compositional bias: polar residues; that stretch reads ENTTAQNKFTSQA. Ser-369 serves as the catalytic Nucleophile. Residue Gly-535 coordinates Ca(2+). Asp-559 acts as the Charge relay system in catalysis. Asp-599 provides a ligand contact to Ca(2+). The active-site Charge relay system is His-600. Residues Asp-602, Asp-607, and Asp-610 each coordinate Ca(2+).

This sequence belongs to the AB hydrolase superfamily. Lipase family. Requires Ca(2+) as cofactor.

It localises to the secreted. It carries out the reaction a triacylglycerol + H2O = a diacylglycerol + a fatty acid + H(+). The enzyme catalyses a 1,2-diacyl-sn-glycero-3-phosphocholine + H2O = a 2-acyl-sn-glycero-3-phosphocholine + a fatty acid + H(+). Functionally, has a broad substrate specificity hydrolyzing a variety of triglycerides and phosphatidylcholines. The polypeptide is Lipase (lip) (Staphylococcus hyicus).